The chain runs to 611 residues: Serine/arginine repetitive matrix protein 4 (611 aa).

Disordered stretches follow at residues 38–248 and 263–611; these read ARKP…PLQM and SAAD…STRR. 2 stretches are compositionally biased toward basic residues: residues 107–123 and 131–189; these read RGKK…RRRS and VKKK…HRCP. The span at 190-202 shows a compositional bias: low complexity; sequence SRSQSSESRPSSC. Basic and acidic residues predominate over residues 203-216; it reads ESRHRGRSPEEGQK. Positions 217-226 are enriched in basic residues; sequence SRRRHSRRCS. Polar residues predominate over residues 270–290; it reads KTASPLTTSRGRSQEYDSGND. Low complexity predominate over residues 291–301; it reads TSSPPSTQTSS. Residues 322–341 show a composition bias toward polar residues; it reads LNSGNTSDSGNSFTTSSPQN. Composition is skewed to low complexity over residues 390–422 and 430–461; these read SRSS…SRST and SRSP…SRYS. Residues 462-482 show a composition bias toward basic and acidic residues; it reads PSRERDPKYSEKDSQQRERER. The span at 483–498 shows a compositional bias: basic residues; the sequence is ARRRRRSYSPMRKRRR. Residues 499–508 show a composition bias toward basic and acidic residues; that stretch reads DSPSHLEARR. Residues 522 to 549 are compositionally biased toward low complexity; that stretch reads PSPSSSGSLSSTSSWYSSSSSRSASRSY. Positions 550 to 564 are enriched in basic residues; that stretch reads SRSRSRSRSRRRSRT. Positions 565-580 are enriched in low complexity; that stretch reads RTSSSSSSRSPSPGSR. Residues 581–595 are compositionally biased toward basic residues; that stretch reads SRSRSRSRSRSRSRS. Low complexity predominate over residues 596–611; it reads QSRSYSSADSYSSTRR.

This sequence belongs to the nSR100 family. Post-translationally, phosphorylated. Specifically expressed in neuronal cells (at protein level). Expressed in the cerebellum.

It localises to the nucleus. In terms of biological role, splicing factor specifically required for neural cell differentiation. Acts in conjunction with nPTB/PTBP2 by binding directly to its regulated target transcripts and promotes neural-specific exon inclusion in many genes that function in neural cell differentiation. Required to promote the inclusion of neural-specific exon 10 in nPTB/PTBP2, leading to increased expression of neural-specific nPTB/PTBP2. Also promotes the inclusion of exon 16 in DAAM1 in neuron extracts. Promotes alternative splicing of REST transcripts to produce REST isoform 3 (REST4) with greatly reduced repressive activity, thereby activating expression of REST targets in neural cells. Plays an important role during embryonic development as well as in the proper functioning of the adult nervous system. Regulates alternative splicing events in genes with important neuronal functions. The polypeptide is Serine/arginine repetitive matrix protein 4 (SRRM4) (Homo sapiens (Human)).